The chain runs to 234 residues: 7-carboxy-7-deazaguanine synthase (234 aa).

Residues I36–G38 and R51 contribute to the substrate site. The Radical SAM core domain maps to F42–E234. [4Fe-4S] cluster is bound by residues C55, C59, and C62. T64 is a binding site for Mg(2+). T100 serves as a coordination point for substrate. S-adenosyl-L-methionine contacts are provided by residues G102, S144–K146, and Q195–D198.

It belongs to the radical SAM superfamily. 7-carboxy-7-deazaguanine synthase family. Homodimer. [4Fe-4S] cluster is required as a cofactor. It depends on S-adenosyl-L-methionine as a cofactor. Mg(2+) serves as cofactor.

The enzyme catalyses 6-carboxy-5,6,7,8-tetrahydropterin + H(+) = 7-carboxy-7-deazaguanine + NH4(+). It participates in purine metabolism; 7-cyano-7-deazaguanine biosynthesis. In terms of biological role, catalyzes the complex heterocyclic radical-mediated conversion of 6-carboxy-5,6,7,8-tetrahydropterin (CPH4) to 7-carboxy-7-deazaguanine (CDG), a step common to the biosynthetic pathways of all 7-deazapurine-containing compounds. The polypeptide is 7-carboxy-7-deazaguanine synthase (Rickettsia prowazekii (strain Madrid E)).